Reading from the N-terminus, the 103-residue chain is Small ribosomal subunit protein uS10 (103 aa).

It belongs to the universal ribosomal protein uS10 family. Part of the 30S ribosomal subunit.

Involved in the binding of tRNA to the ribosomes. The chain is Small ribosomal subunit protein uS10 from Shewanella denitrificans (strain OS217 / ATCC BAA-1090 / DSM 15013).